A 189-amino-acid chain; its full sequence is uncharacterized protein (189 aa).

Residues 1–20 form the signal peptide; the sequence is MKFSTVGFLFSTILFKSAFA. The region spanning 74–109 is the EF-hand domain; the sequence is KKNEVLVDVLKKCDPSGNRRITLDEFLAFRKNGGEL. 5 residues coordinate Ca(2+): D87, S89, N91, R93, and E98.

The protein resides in the endoplasmic reticulum lumen. It is found in the golgi apparatus lumen. This is an uncharacterized protein from Schizosaccharomyces pombe (strain 972 / ATCC 24843) (Fission yeast).